Here is a 602-residue protein sequence, read N- to C-terminus: Elongation factor 4 (602 aa).

Residues 7 to 188 (ENIRNFSIIA…SIIRLVPPPK (182 aa)) enclose the tr-type G domain. Residues 19 to 24 (DHGKST) and 135 to 138 (NKID) contribute to the GTP site.

The protein belongs to the TRAFAC class translation factor GTPase superfamily. Classic translation factor GTPase family. LepA subfamily.

The protein resides in the cell inner membrane. It catalyses the reaction GTP + H2O = GDP + phosphate + H(+). Required for accurate and efficient protein synthesis under certain stress conditions. May act as a fidelity factor of the translation reaction, by catalyzing a one-codon backward translocation of tRNAs on improperly translocated ribosomes. Back-translocation proceeds from a post-translocation (POST) complex to a pre-translocation (PRE) complex, thus giving elongation factor G a second chance to translocate the tRNAs correctly. Binds to ribosomes in a GTP-dependent manner. This chain is Elongation factor 4, found in Chlamydia trachomatis serovar A (strain ATCC VR-571B / DSM 19440 / HAR-13).